A 251-amino-acid chain; its full sequence is MFEKGSLIPYLTAGDPSVEKTLEFLLAVEEFAGLIELGIPFSDPMADGKTIQESHYRALRNGFKLDDTFRILREFRRHSSTPVILMTYYNPVFRTGVKKFLGEAKASGADGILVVDLPVSHAGEFLDAAKEEGLKTVFLAAPNTPDERLREIDKASTGFVYLISLYGTTGARDRLPETAFEFVRRARKICNNKLAVGFGVSRREQVEELLKAGADGVVVGSALIELISRSENPVEELRRKVAELSGYSRAL.

Residues Glu36 and Asp47 each act as proton acceptor in the active site.

It belongs to the TrpA family. As to quaternary structure, tetramer of two alpha and two beta chains.

It carries out the reaction (1S,2R)-1-C-(indol-3-yl)glycerol 3-phosphate + L-serine = D-glyceraldehyde 3-phosphate + L-tryptophan + H2O. Its pathway is amino-acid biosynthesis; L-tryptophan biosynthesis; L-tryptophan from chorismate: step 5/5. Its function is as follows. The alpha subunit is responsible for the aldol cleavage of indoleglycerol phosphate to indole and glyceraldehyde 3-phosphate. In Thermococcus kodakarensis (strain ATCC BAA-918 / JCM 12380 / KOD1) (Pyrococcus kodakaraensis (strain KOD1)), this protein is Tryptophan synthase alpha chain.